The primary structure comprises 268 residues: 4-hydroxy-tetrahydrodipicolinate reductase (268 aa).

NAD(+) contacts are provided by residues 10 to 15 and Asp-36; that span reads GASGRM. An NADP(+)-binding site is contributed by Arg-37. NAD(+) contacts are provided by residues 99-101 and 123-126; these read GTT and SANM. The Proton donor/acceptor role is filled by His-156. His-157 contributes to the (S)-2,3,4,5-tetrahydrodipicolinate binding site. Lys-160 serves as the catalytic Proton donor. 166-167 is a binding site for (S)-2,3,4,5-tetrahydrodipicolinate; that stretch reads GT.

It belongs to the DapB family.

Its subcellular location is the cytoplasm. The enzyme catalyses (S)-2,3,4,5-tetrahydrodipicolinate + NAD(+) + H2O = (2S,4S)-4-hydroxy-2,3,4,5-tetrahydrodipicolinate + NADH + H(+). The catalysed reaction is (S)-2,3,4,5-tetrahydrodipicolinate + NADP(+) + H2O = (2S,4S)-4-hydroxy-2,3,4,5-tetrahydrodipicolinate + NADPH + H(+). It participates in amino-acid biosynthesis; L-lysine biosynthesis via DAP pathway; (S)-tetrahydrodipicolinate from L-aspartate: step 4/4. Functionally, catalyzes the conversion of 4-hydroxy-tetrahydrodipicolinate (HTPA) to tetrahydrodipicolinate. In Burkholderia thailandensis (strain ATCC 700388 / DSM 13276 / CCUG 48851 / CIP 106301 / E264), this protein is 4-hydroxy-tetrahydrodipicolinate reductase.